The following is a 300-amino-acid chain: Bifunctional protein FolD 2 (300 aa).

Residues 166–168, Ser-191, and Ile-232 contribute to the NADP(+) site; that span reads GRS.

Belongs to the tetrahydrofolate dehydrogenase/cyclohydrolase family. In terms of assembly, homodimer.

The enzyme catalyses (6R)-5,10-methylene-5,6,7,8-tetrahydrofolate + NADP(+) = (6R)-5,10-methenyltetrahydrofolate + NADPH. It catalyses the reaction (6R)-5,10-methenyltetrahydrofolate + H2O = (6R)-10-formyltetrahydrofolate + H(+). Its pathway is one-carbon metabolism; tetrahydrofolate interconversion. Functionally, catalyzes the oxidation of 5,10-methylenetetrahydrofolate to 5,10-methenyltetrahydrofolate and then the hydrolysis of 5,10-methenyltetrahydrofolate to 10-formyltetrahydrofolate. The sequence is that of Bifunctional protein FolD 2 from Roseobacter denitrificans (strain ATCC 33942 / OCh 114) (Erythrobacter sp. (strain OCh 114)).